Here is a 334-residue protein sequence, read N- to C-terminus: Isocitrate/homoisocitrate dehydrogenase (334 aa).

70-72 lines the NADH pocket; the sequence is ATS. The (2R,3S)-homoisocitrate site is built by Ser-72, Arg-85, Arg-88, Arg-98, Arg-118, Tyr-125, Lys-171, and Asn-173. Position 173 (Asn-173) interacts with NADH. Positions 204, 228, and 232 each coordinate Mg(2+). Residues 261–265 and Asn-273 each bind NADH; that span reads GSAPD.

This sequence belongs to the isocitrate and isopropylmalate dehydrogenases family. As to quaternary structure, homotetramer. Dimer of dimers. The homotetramer can transiently dissociate into homodimers. Mg(2+) serves as cofactor.

It catalyses the reaction (2R,3S)-homoisocitrate + NAD(+) = 2-oxoadipate + CO2 + NADH. The catalysed reaction is D-threo-isocitrate + NAD(+) = 2-oxoglutarate + CO2 + NADH. Its pathway is amino-acid biosynthesis; L-lysine biosynthesis via AAA pathway; L-alpha-aminoadipate from 2-oxoglutarate: step 4/5. In terms of biological role, catalyzes the NAD(+)-dependent oxidative decarboxylation of homoisocitrate to 2-oxoadipate (alpha-ketoadipate), a reaction involved in lysine biosynthesis through the alpha-aminoadipate pathway. In addition, has high activity with isocitrate, but is inactive with 3-isopropylmalate. The sequence is that of Isocitrate/homoisocitrate dehydrogenase (hicd) from Thermus thermophilus (strain ATCC BAA-163 / DSM 7039 / HB27).